A 264-amino-acid polypeptide reads, in one-letter code: ATP synthase subunit a (264 aa).

6 helical membrane-spanning segments follow: residues 29-49 (TWHIDSLFFSVGLGVLFLWIF), 90-110 (IAPLALTIFMWVFMMNFMDMI), 134-154 (DVNITFSLAIGVFVLIIYYSI), 177-197 (IPVNLLLETVTLIAKPISLAL), 208-228 (LIFILIALMYGTNLLLSSLGV), and 235-255 (LIFHILVITLQAFIFMMLTIV).

The protein belongs to the ATPase A chain family. In terms of assembly, F-type ATPases have 2 components, CF(1) - the catalytic core - and CF(0) - the membrane proton channel. CF(1) has five subunits: alpha(3), beta(3), gamma(1), delta(1), epsilon(1). CF(0) has three main subunits: a(1), b(2) and c(9-12). The alpha and beta chains form an alternating ring which encloses part of the gamma chain. CF(1) is attached to CF(0) by a central stalk formed by the gamma and epsilon chains, while a peripheral stalk is formed by the delta and b chains.

The protein localises to the cell inner membrane. In terms of biological role, key component of the proton channel; it plays a direct role in the translocation of protons across the membrane. In Shewanella oneidensis (strain ATCC 700550 / JCM 31522 / CIP 106686 / LMG 19005 / NCIMB 14063 / MR-1), this protein is ATP synthase subunit a.